The chain runs to 473 residues: Photosystem II CP43 reaction center protein (473 aa).

A propeptide spanning residues 1 to 14 is cleaved from the precursor; sequence MKTLYSLRRFYHVE. T15 bears the N-acetylthreonine mark. Position 15 is a phosphothreonine (T15). A run of 5 helical transmembrane segments spans residues 69–93, 134–155, 178–200, 255–275, and 291–312; these read LFEVAHFVPEKPMYEQGLILLPHLA, LLGPETLEESFPFFGYVWKDRN, KAFYFGGIYDTWAPGGGDVRKIT, KPFAWARRALVWSGEAYLSYS, and WFNNTAYPSEFYGPTGPEASQA. A [CaMn4O5] cluster-binding site is contributed by E367. Residues 447–471 form a helical membrane-spanning segment; that stretch reads RARAAAAGFEKGIDRDFEPVLSMTP.

Belongs to the PsbB/PsbC family. PsbC subfamily. PSII is composed of 1 copy each of membrane proteins PsbA, PsbB, PsbC, PsbD, PsbE, PsbF, PsbH, PsbI, PsbJ, PsbK, PsbL, PsbM, PsbT, PsbX, PsbY, PsbZ, Psb30/Ycf12, at least 3 peripheral proteins of the oxygen-evolving complex and a large number of cofactors. It forms dimeric complexes. Binds multiple chlorophylls and provides some of the ligands for the Ca-4Mn-5O cluster of the oxygen-evolving complex. It may also provide a ligand for a Cl- that is required for oxygen evolution. PSII binds additional chlorophylls, carotenoids and specific lipids. serves as cofactor.

The protein resides in the plastid. Its subcellular location is the chloroplast thylakoid membrane. In terms of biological role, one of the components of the core complex of photosystem II (PSII). It binds chlorophyll and helps catalyze the primary light-induced photochemical processes of PSII. PSII is a light-driven water:plastoquinone oxidoreductase, using light energy to abstract electrons from H(2)O, generating O(2) and a proton gradient subsequently used for ATP formation. The polypeptide is Photosystem II CP43 reaction center protein (Pisum sativum (Garden pea)).